Here is a 200-residue protein sequence, read N- to C-terminus: Large ribosomal subunit protein uL4 (200 aa).

Residues 38 to 72 (GRQGSKQQKTRSDVSGGGKRPWRQKGTGRARAGTI) are disordered.

This sequence belongs to the universal ribosomal protein uL4 family. Part of the 50S ribosomal subunit.

In terms of biological role, one of the primary rRNA binding proteins, this protein initially binds near the 5'-end of the 23S rRNA. It is important during the early stages of 50S assembly. It makes multiple contacts with different domains of the 23S rRNA in the assembled 50S subunit and ribosome. Its function is as follows. Forms part of the polypeptide exit tunnel. The sequence is that of Large ribosomal subunit protein uL4 from Pseudomonas fluorescens (strain ATCC BAA-477 / NRRL B-23932 / Pf-5).